A 328-amino-acid chain; its full sequence is Small neutral protease regulatory protein (328 aa).

In terms of domain architecture, HTH lysR-type spans 1-60; it reads MELEVRHLRALCAIADAGSLHRAARRLGVAQPTLSTQLTRIEQALGGPLFTRERTGCRPT. A DNA-binding region (H-T-H motif) is located at residues 20-39; that stretch reads LHRAARRLGVAQPTLSTQLT.

This sequence belongs to the LysR transcriptional regulatory family.

Functionally, transcriptional trans-activator of the gene (mprA) for the small neutral protease. This chain is Small neutral protease regulatory protein (mprR), found in Streptomyces coelicolor (strain ATCC BAA-471 / A3(2) / M145).